Here is a 183-residue protein sequence, read N- to C-terminus: Adenine phosphoribosyltransferase (183 aa).

The protein belongs to the purine/pyrimidine phosphoribosyltransferase family. Homodimer.

The protein localises to the cytoplasm. It carries out the reaction AMP + diphosphate = 5-phospho-alpha-D-ribose 1-diphosphate + adenine. The protein operates within purine metabolism; AMP biosynthesis via salvage pathway; AMP from adenine: step 1/1. Its function is as follows. Catalyzes a salvage reaction resulting in the formation of AMP, that is energically less costly than de novo synthesis. The polypeptide is Adenine phosphoribosyltransferase (Erwinia tasmaniensis (strain DSM 17950 / CFBP 7177 / CIP 109463 / NCPPB 4357 / Et1/99)).